The chain runs to 178 residues: Interleukin-10 (178 aa).

The first 18 residues, 1–18 (MHSSALLCCLVLLTGVRA), serve as a signal peptide directing secretion. 2 cysteine pairs are disulfide-bonded: Cys-30–Cys-126 and Cys-80–Cys-132. The N-linked (GlcNAc...) asparagine glycan is linked to Asn-134.

The protein belongs to the IL-10 family. Homodimer. Interacts with IL10RA and IL10RB. In terms of tissue distribution, produced by a variety of cell lines, including T-cells, macrophages, mast cells and other cell types.

It is found in the secreted. Its function is as follows. Major immune regulatory cytokine that acts on many cells of the immune system where it has profound anti-inflammatory functions, limiting excessive tissue disruption caused by inflammation. Mechanistically, IL10 binds to its heterotetrameric receptor comprising IL10RA and IL10RB leading to JAK1 and STAT2-mediated phosphorylation of STAT3. In turn, STAT3 translocates to the nucleus where it drives expression of anti-inflammatory mediators. Targets antigen-presenting cells (APCs) such as macrophages and monocytes and inhibits their release of pro-inflammatory cytokines including granulocyte-macrophage colony-stimulating factor /GM-CSF, granulocyte colony-stimulating factor/G-CSF, IL-1 alpha, IL-1 beta, IL-6, IL-8 and TNF-alpha. Also interferes with antigen presentation by reducing the expression of MHC-class II and co-stimulatory molecules, thereby inhibiting their ability to induce T cell activation. In addition, controls the inflammatory response of macrophages by reprogramming essential metabolic pathways including mTOR signaling. The protein is Interleukin-10 (IL10) of Homo sapiens (Human).